The chain runs to 96 residues: Small ribosomal subunit protein bS6c (96 aa).

It belongs to the bacterial ribosomal protein bS6 family.

The protein resides in the plastid. It is found in the chloroplast. Functionally, binds together with bS18 to 16S ribosomal RNA. This chain is Small ribosomal subunit protein bS6c (rps6), found in Guillardia theta (Cryptophyte).